A 448-amino-acid chain; its full sequence is MVSISASGGYAMPCCCESQELQSSDMETPAVGTPEFDRNVPRICGVCGDRATGFHFNAMTCEGCKGFFRRSMKRKAMFTCPFSGDCKITKDNRRHCQACRLKRCVDIGMMKEFILTDEEVQRKREMILKRKEEEALKESLKPKLSEEQQKVINILLEAHHKTFDTTYSDFNKFRPPVRSKFSSSTATHSSSVVSQDFSSEDSNDVFGSDAFGAFPEPMEPQMFSNLDLSEESDESPSMNIELPHLPMLPHLADLVSYSIQKVIGFAKMIPGFRDLTAEDQIALLKSSAIEVIMLRSNQSFTMEDMSWTCGSNDFKYKVSDVTQAGHSMDLLEPLVKFQVGLKKLNLHEEEHVLLMAICILSPDRPGVQDTSLVESIQDRLSDTLQTYIRCRHPPPGSRLLYAKMIQKLADLRSLNEEHSKQYRCLSFQPEHSMQLTPLVLEVFGNEIS.

A DNA-binding region (nuclear receptor) is located at residues 41 to 116 (PRICGVCGDR…IGMMKEFILT (76 aa)). Positions 44, 47, 61, 64, 80, 86, 96, and 99 each coordinate Zn(2+). 2 NR C4-type zinc fingers span residues 44 to 64 (CGVCGDRATGFHFNAMTCEGC) and 80 to 104 (CPFSGDCKITKDNRRHCQACRLKRC). Positions 117 to 146 (DEEVQRKREMILKRKEEEALKESLKPKLSE) are hinge. The NR LBD domain maps to 147-444 (EQQKVINILL…LTPLVLEVFG (298 aa)). Ser-258 lines the calcitriol pocket. An interaction with coactivator LXXLL motif region spans residues 267 to 285 (KMIPGFRDLTAEDQIALLK). 4 residues coordinate calcitriol: Arg-295, Ser-299, His-326, and His-418. The 9aaTAD motif lies at 437–445 (PLVLEVFGN).

The protein belongs to the nuclear hormone receptor family. NR1 subfamily. As to quaternary structure, homodimer in the absence of bound vitamin D3. Heterodimer with RXRA after vitamin D3 binding.

It is found in the nucleus. The protein resides in the cytoplasm. In terms of biological role, nuclear receptor for calcitriol, the active form of vitamin D3 which mediates the action of this vitamin on cells. Enters the nucleus upon vitamin D3 binding where it forms heterodimers with the retinoid X receptor/RXR. The VDR-RXR heterodimers bind to specific response elements on DNA and activate the transcription of vitamin D3-responsive target genes. Plays a central role in calcium homeostasis. Also functions as a receptor for the secondary bile acid lithocholic acid (LCA) and its metabolites. This chain is Vitamin D3 receptor (VDR), found in Coturnix japonica (Japanese quail).